A 532-amino-acid chain; its full sequence is Membrane protein insertase YidC (532 aa).

Helical transmembrane passes span 7–27 (FFIF…QSQM), 336–356 (LTIL…ITFI), 413–433 (GGFL…YMLI), 450–470 (LSSQ…MFFI), and 492–512 (PVIF…YYII).

The protein belongs to the OXA1/ALB3/YidC family. Type 1 subfamily. Interacts with the Sec translocase complex via SecD. Specifically interacts with transmembrane segments of nascent integral membrane proteins during membrane integration.

It localises to the cell membrane. In terms of biological role, required for the insertion and/or proper folding and/or complex formation of integral membrane proteins into the membrane. Involved in integration of membrane proteins that insert both dependently and independently of the Sec translocase complex, as well as at least some lipoproteins. Aids folding of multispanning membrane proteins. In Buchnera aphidicola subsp. Acyrthosiphon pisum (strain Tuc7), this protein is Membrane protein insertase YidC.